The chain runs to 236 residues: Ubiquinone biosynthesis O-methyltransferase (236 aa).

Residues R39, G59, D80, and M124 each contribute to the S-adenosyl-L-methionine site.

Belongs to the methyltransferase superfamily. UbiG/COQ3 family.

The catalysed reaction is a 3-demethylubiquinol + S-adenosyl-L-methionine = a ubiquinol + S-adenosyl-L-homocysteine + H(+). It carries out the reaction a 3-(all-trans-polyprenyl)benzene-1,2-diol + S-adenosyl-L-methionine = a 2-methoxy-6-(all-trans-polyprenyl)phenol + S-adenosyl-L-homocysteine + H(+). It functions in the pathway cofactor biosynthesis; ubiquinone biosynthesis. O-methyltransferase that catalyzes the 2 O-methylation steps in the ubiquinone biosynthetic pathway. This is Ubiquinone biosynthesis O-methyltransferase from Shewanella sp. (strain W3-18-1).